A 121-amino-acid polypeptide reads, in one-letter code: Flagellar protein FliT (121 aa).

The segment at 1-50 (MNHAPHLYFAWQQLVEKSQLMLRLATEEQWDELIASEMAYVNAVQEIAHL) is required for homodimerization. Positions 60–98 (MQEQLRPMLRLILDNESKVKQLLQIRMDELAKLVGQSSV) are fliD binding.

Belongs to the FliT family. As to quaternary structure, homodimer. Interacts with FliD and FlhC.

It localises to the cytoplasm. It is found in the cytosol. Functionally, dual-function protein that regulates the transcription of class 2 flagellar operons and that also acts as an export chaperone for the filament-capping protein FliD. As a transcriptional regulator, acts as an anti-FlhDC factor; it directly binds FlhC, thus inhibiting the binding of the FlhC/FlhD complex to class 2 promoters, resulting in decreased expression of class 2 flagellar operons. As a chaperone, effects FliD transition to the membrane by preventing its premature polymerization, and by directing it to the export apparatus. The polypeptide is Flagellar protein FliT (Escherichia coli O157:H7).